A 302-amino-acid polypeptide reads, in one-letter code: Succinate--CoA ligase [ADP-forming] subunit alpha (302 aa).

CoA contacts are provided by residues 17 to 20 (TGST), Lys-43, and 96 to 98 (ITE). Residue Tyr-159 participates in substrate binding. His-247 serves as the catalytic Tele-phosphohistidine intermediate.

It belongs to the succinate/malate CoA ligase alpha subunit family. As to quaternary structure, heterotetramer of two alpha and two beta subunits.

The catalysed reaction is succinate + ATP + CoA = succinyl-CoA + ADP + phosphate. The enzyme catalyses GTP + succinate + CoA = succinyl-CoA + GDP + phosphate. The protein operates within carbohydrate metabolism; tricarboxylic acid cycle; succinate from succinyl-CoA (ligase route): step 1/1. Functionally, succinyl-CoA synthetase functions in the citric acid cycle (TCA), coupling the hydrolysis of succinyl-CoA to the synthesis of either ATP or GTP and thus represents the only step of substrate-level phosphorylation in the TCA. The alpha subunit of the enzyme binds the substrates coenzyme A and phosphate, while succinate binding and nucleotide specificity is provided by the beta subunit. The protein is Succinate--CoA ligase [ADP-forming] subunit alpha of Staphylococcus epidermidis (strain ATCC 12228 / FDA PCI 1200).